A 256-amino-acid polypeptide reads, in one-letter code: Tryptophan synthase alpha chain (256 aa).

Catalysis depends on proton acceptor residues Glu48 and Asp59.

It belongs to the TrpA family. In terms of assembly, tetramer of two alpha and two beta chains.

The catalysed reaction is (1S,2R)-1-C-(indol-3-yl)glycerol 3-phosphate + L-serine = D-glyceraldehyde 3-phosphate + L-tryptophan + H2O. It functions in the pathway amino-acid biosynthesis; L-tryptophan biosynthesis; L-tryptophan from chorismate: step 5/5. Its function is as follows. The alpha subunit is responsible for the aldol cleavage of indoleglycerol phosphate to indole and glyceraldehyde 3-phosphate. The protein is Tryptophan synthase alpha chain of Caldicellulosiruptor bescii (strain ATCC BAA-1888 / DSM 6725 / KCTC 15123 / Z-1320) (Anaerocellum thermophilum).